The following is a 183-amino-acid chain: uncharacterized protein (183 aa).

4 helical membrane-spanning segments follow: residues 37 to 59, 79 to 98, 110 to 132, and 142 to 161; these read LFGYISVGFLLFHPLLEVLPRQF, AILLGIAGWAVMLTLAVTSV, WRTFHGILAVVLITVVGYHVLVL, and AFYAVLLAGGYVTMIKTYVF.

It localises to the cell membrane. This is an uncharacterized protein from Archaeoglobus fulgidus (strain ATCC 49558 / DSM 4304 / JCM 9628 / NBRC 100126 / VC-16).